Here is a 103-residue protein sequence, read N- to C-terminus: Small ribosomal subunit protein uS14c (103 aa).

The protein belongs to the universal ribosomal protein uS14 family. In terms of assembly, part of the 30S ribosomal subunit.

The protein localises to the plastid. Its subcellular location is the chloroplast. Binds 16S rRNA, required for the assembly of 30S particles. This Agrostis stolonifera (Creeping bentgrass) protein is Small ribosomal subunit protein uS14c.